Reading from the N-terminus, the 271-residue chain is Mediator of RNA polymerase II transcription subunit 18 (271 aa).

Residues F89–Y119 are disordered.

Belongs to the Mediator complex subunit 18 family. As to quaternary structure, component of the Mediator complex.

The protein resides in the nucleus. Functionally, component of the Mediator complex, a coactivator involved in the regulated transcription of nearly all RNA polymerase II-dependent genes. Mediator functions as a bridge to convey information from gene-specific regulatory proteins to the basal RNA polymerase II transcription machinery. Mediator is recruited to promoters by direct interactions with regulatory proteins and serves as a scaffold for the assembly of a functional preinitiation complex with RNA polymerase II and the general transcription factors. The protein is Mediator of RNA polymerase II transcription subunit 18 (srb5) of Aspergillus niger (strain ATCC MYA-4892 / CBS 513.88 / FGSC A1513).